A 424-amino-acid polypeptide reads, in one-letter code: Zinc metalloproteinase-disintegrin-like brevilysin H2a (424 aa).

Pyrrolidone carboxylic acid is present on Q1. The region spanning 9-207 is the Peptidase M12B domain; it reads RYVKLAIVAD…YKPQCILNEP (199 aa). An N-linked (GlcNAc...) asparagine glycan is attached at N69. Ca(2+) is bound at residue D96. 3 cysteine pairs are disulfide-bonded: C120–C202, C164–C186, and C166–C169. H145 is a Zn(2+) binding site. Residue E146 is part of the active site. The Zn(2+) site is built by H149 and H155. The N-linked (GlcNAc...) asparagine glycan is linked to N185. Ca(2+)-binding residues include C202, N205, V217, N220, L222, E224, E227, and D230. The Disintegrin domain maps to 215–301; sequence PPVCGNELLE…DCPTDDLQRN (87 aa). Cystine bridges form between C218–C247, C229–C242, C231–C237, C241–C264, C255–C261, C260–C286, C273–C293, C280–C312, C305–C317, C324–C374, C339–C385, C352–C362, C369–C411, and C405–C417. The D/ECD-tripeptide motif lies at 279 to 281; the sequence is DCD. Residues D281, E284, and D296 each coordinate Ca(2+). A glycan (N-linked (GlcNAc...) asparagine) is linked at N331.

This sequence belongs to the venom metalloproteinase (M12B) family. P-III subfamily. P-IIIa sub-subfamily. As to quaternary structure, monomer. Zn(2+) serves as cofactor. Glycosylated. In terms of tissue distribution, expressed by the venom gland.

It localises to the secreted. Its proteolytic activity is inhibited by EDTA, TPEN, 1,10-phenanthroline, and some thiol compounds, but is enhanced by alkaline earth metal ions (Mg2+, Ca2+, Sr2+, and Ba2+). Its activity is not modulated by urea (4 M). Its function is as follows. Non-hemorrhagic metalloproteinase that degrades fibrinogen. The alpha chain (FGA) is rapidly degraded, the beta chain (FGB) is degraded very slowly, while the gamma chain is left intact. Shows a prefential cleavage at X-Leu bonds. Cleaves insulin B chain at '29-His-|-Leu-30', '33-Ser-|-His-34', '38-Ala-|-Leu-39' and '40-Tyr-|-Leu-41' bonds. This is Zinc metalloproteinase-disintegrin-like brevilysin H2a from Gloydius brevicauda (Korean slamosa snake).